A 418-amino-acid chain; its full sequence is Glutamyl-tRNA reductase (418 aa).

Substrate-binding positions include Thr-49–Arg-52, Ser-109, Glu-114–Gln-116, and Gln-120. Cys-50 (nucleophile) is an active-site residue. Residue Gly-189–Ile-194 coordinates NADP(+).

Belongs to the glutamyl-tRNA reductase family. As to quaternary structure, homodimer.

The enzyme catalyses (S)-4-amino-5-oxopentanoate + tRNA(Glu) + NADP(+) = L-glutamyl-tRNA(Glu) + NADPH + H(+). It functions in the pathway porphyrin-containing compound metabolism; protoporphyrin-IX biosynthesis; 5-aminolevulinate from L-glutamyl-tRNA(Glu): step 1/2. Catalyzes the NADPH-dependent reduction of glutamyl-tRNA(Glu) to glutamate 1-semialdehyde (GSA). The sequence is that of Glutamyl-tRNA reductase from Escherichia coli O139:H28 (strain E24377A / ETEC).